The chain runs to 413 residues: E3 ubiquitin-protein ligase makorin (413 aa).

2 C3H1-type zinc fingers span residues 2 to 29 (PRHE…HDVA) and 30 to 57 (TRNE…HTRP). A disordered region spans residues 61 to 85 (ELPSCSTPQTSQNQQNLQNSGQRVR). Low complexity predominate over residues 66 to 82 (STPQTSQNQQNLQNSGQ). Residues 138-167 (QAQLMMCPYHQKSGDCNRQDMDCPFAHGNY) form a C3H1-type 3 zinc finger. The RING-type zinc finger occupies 213-267 (CGICMENIFEKNLRFGILNGCQHCFCLDCIRQWRSKDQENVELATKTVRSCPECR). The C3H1-type 4 zinc-finger motif lies at 296–327 (NTKRKICKYYSNERSRGACPFGNKCFYKHQLP).

In terms of assembly, component of a complex at least containing lep-2, lin-28 and the long non-coding RNA lep-5, which mediates the degradation of lin-28. In terms of tissue distribution, expressed in seam, tail tip, and other hypodermal cells, head and tail neurons, the pharynx, intestine and the developing hermaphrodite somatic gonad. Not expressed in body wall muscle cells.

It is found in the cytoplasm. The catalysed reaction is S-ubiquitinyl-[E2 ubiquitin-conjugating enzyme]-L-cysteine + [acceptor protein]-L-lysine = [E2 ubiquitin-conjugating enzyme]-L-cysteine + N(6)-ubiquitinyl-[acceptor protein]-L-lysine.. Its pathway is protein modification; protein ubiquitination. E3 ubiquitin ligase which catalyzes the covalent attachment of ubiquitin moieties onto substrate proteins. Promotes the larval to adult transition by binding to the long non-coding RNA lep-5 to target the heterochronic protein lin-28 for degradation by the proteasome. This association and degradation of lin-28 also controls the timing of the sexual differentiation of individual neurons in males including the AIM, AWA, ADF, ASJ and CEM neurons. Plays a role in governing the developmental timing of male tail tip morphogenesis. Plays a role in two aspects of male mating behavior: response to hermaphrodite contact and vulva location. May play a role in the detection of preferred food sources. The protein is E3 ubiquitin-protein ligase makorin of Caenorhabditis elegans.